The sequence spans 329 residues: 4-hydroxythreonine-4-phosphate dehydrogenase (329 aa).

2 residues coordinate substrate: histidine 136 and threonine 137. The a divalent metal cation site is built by histidine 166, histidine 211, and histidine 266. 3 residues coordinate substrate: lysine 274, asparagine 283, and arginine 292.

This sequence belongs to the PdxA family. In terms of assembly, homodimer. The cofactor is Zn(2+). Mg(2+) is required as a cofactor. Co(2+) serves as cofactor.

It is found in the cytoplasm. It catalyses the reaction 4-(phosphooxy)-L-threonine + NAD(+) = 3-amino-2-oxopropyl phosphate + CO2 + NADH. Its pathway is cofactor biosynthesis; pyridoxine 5'-phosphate biosynthesis; pyridoxine 5'-phosphate from D-erythrose 4-phosphate: step 4/5. Functionally, catalyzes the NAD(P)-dependent oxidation of 4-(phosphooxy)-L-threonine (HTP) into 2-amino-3-oxo-4-(phosphooxy)butyric acid which spontaneously decarboxylates to form 3-amino-2-oxopropyl phosphate (AHAP). The chain is 4-hydroxythreonine-4-phosphate dehydrogenase from Salmonella typhi.